A 370-amino-acid chain; its full sequence is 3-dehydroquinate synthase (370 aa).

NAD(+) is bound by residues 108 to 112 (GVIGD), 132 to 133 (TT), K145, and K154. Zn(2+)-binding residues include E187, H249, and H267.

It belongs to the sugar phosphate cyclases superfamily. Dehydroquinate synthase family. The cofactor is Co(2+). It depends on Zn(2+) as a cofactor. NAD(+) serves as cofactor.

Its subcellular location is the cytoplasm. The enzyme catalyses 7-phospho-2-dehydro-3-deoxy-D-arabino-heptonate = 3-dehydroquinate + phosphate. It participates in metabolic intermediate biosynthesis; chorismate biosynthesis; chorismate from D-erythrose 4-phosphate and phosphoenolpyruvate: step 2/7. Its function is as follows. Catalyzes the conversion of 3-deoxy-D-arabino-heptulosonate 7-phosphate (DAHP) to dehydroquinate (DHQ). In Cereibacter sphaeroides (strain KD131 / KCTC 12085) (Rhodobacter sphaeroides), this protein is 3-dehydroquinate synthase.